Consider the following 132-residue polypeptide: Large ribosomal subunit protein bL17 (132 aa).

It belongs to the bacterial ribosomal protein bL17 family. Part of the 50S ribosomal subunit. Contacts protein L32.

The sequence is that of Large ribosomal subunit protein bL17 from Variovorax paradoxus (strain S110).